The following is a 329-amino-acid chain: 4-hydroxythreonine-4-phosphate dehydrogenase (329 aa).

Substrate-binding residues include histidine 136 and threonine 137. Histidine 166, histidine 211, and histidine 266 together coordinate a divalent metal cation. Substrate contacts are provided by lysine 274, asparagine 283, and arginine 292.

This sequence belongs to the PdxA family. Homodimer. The cofactor is Zn(2+). Requires Mg(2+) as cofactor. Co(2+) is required as a cofactor.

It localises to the cytoplasm. It catalyses the reaction 4-(phosphooxy)-L-threonine + NAD(+) = 3-amino-2-oxopropyl phosphate + CO2 + NADH. The protein operates within cofactor biosynthesis; pyridoxine 5'-phosphate biosynthesis; pyridoxine 5'-phosphate from D-erythrose 4-phosphate: step 4/5. Its function is as follows. Catalyzes the NAD(P)-dependent oxidation of 4-(phosphooxy)-L-threonine (HTP) into 2-amino-3-oxo-4-(phosphooxy)butyric acid which spontaneously decarboxylates to form 3-amino-2-oxopropyl phosphate (AHAP). The protein is 4-hydroxythreonine-4-phosphate dehydrogenase of Escherichia coli O17:K52:H18 (strain UMN026 / ExPEC).